We begin with the raw amino-acid sequence, 309 residues long: Ribosomal protein L11 methyltransferase (309 aa).

Residues Thr-160, Gly-181, Asp-203, and Asn-245 each coordinate S-adenosyl-L-methionine.

The protein belongs to the methyltransferase superfamily. PrmA family.

It localises to the cytoplasm. The catalysed reaction is L-lysyl-[protein] + 3 S-adenosyl-L-methionine = N(6),N(6),N(6)-trimethyl-L-lysyl-[protein] + 3 S-adenosyl-L-homocysteine + 3 H(+). Functionally, methylates ribosomal protein L11. This chain is Ribosomal protein L11 methyltransferase, found in Caldanaerobacter subterraneus subsp. tengcongensis (strain DSM 15242 / JCM 11007 / NBRC 100824 / MB4) (Thermoanaerobacter tengcongensis).